Consider the following 657-residue polypeptide: Pyoverdine export ATP-binding/permease protein PvdT (657 aa).

The region spanning Ile-6–Ala-245 is the ABC transporter domain. Gly-43–Ser-50 contributes to the ATP binding site. 4 consecutive transmembrane segments (helical) span residues Ala-285–Gly-305, Ile-539–Val-559, Leu-590–Ile-610, and Leu-620–Met-640.

It belongs to the ABC transporter superfamily. Macrolide exporter (TC 3.A.1.122) family. As to quaternary structure, part of the tripartite efflux system PvdRT-OpmQ, which is composed of an inner membrane component with both ATPase and permease domains, PvdT, a periplasmic membrane fusion protein, PvdR, and an outer membrane component, OpmQ.

The protein localises to the cell inner membrane. Its function is as follows. Part of the tripartite efflux system PvdRT-OpmQ required for the secretion into the extracellular milieu of the siderophore pyoverdine (PVD), which is involved in iron acquisition. This subunit binds PVD and drives its secretion by hydrolyzing ATP. The system is responsible for export of newly synthesized PVD after the final steps of biosynthesis have taken place in the periplasm. It is also responsible for recycling of PVD after internalization of ferri-PVD into the periplasm by the outer-membrane receptor FpvA and release of iron from PVD, thus making PVD available for new cycles of iron uptake. In Pseudomonas fluorescens (strain Pf0-1), this protein is Pyoverdine export ATP-binding/permease protein PvdT.